We begin with the raw amino-acid sequence, 101 residues long: Ubiquitin-related modifier 1 (101 aa).

The residue at position 101 (Gly-101) is a 1-thioglycine. Gly-101 is covalently cross-linked (Glycyl lysine isopeptide (Gly-Lys) (interchain with K-? in acceptor proteins)).

The protein belongs to the URM1 family. C-terminal thiocarboxylation occurs in 2 steps, it is first acyl-adenylated (-COAMP) via the hesA/moeB/thiF part of the MOCS3 homolog, then thiocarboxylated (-COSH) via the rhodanese domain of the MOCS3 homolog.

It is found in the cytoplasm. Its pathway is tRNA modification; 5-methoxycarbonylmethyl-2-thiouridine-tRNA biosynthesis. In terms of biological role, acts as a sulfur carrier required for 2-thiolation of mcm(5)S(2)U at tRNA wobble positions of cytosolic tRNA(Lys), tRNA(Glu) and tRNA(Gln). Serves as sulfur donor in tRNA 2-thiolation reaction by being thiocarboxylated (-COSH) at its C-terminus by MOCS3. The sulfur is then transferred to tRNA to form 2-thiolation of mcm(5)S(2)U. Also acts as a ubiquitin-like protein (UBL) that is covalently conjugated via an isopeptide bond to lysine residues of target proteins. The thiocarboxylated form serves as substrate for conjugation and oxidative stress specifically induces the formation of UBL-protein conjugates. This chain is Ubiquitin-related modifier 1, found in Gallus gallus (Chicken).